The following is a 250-amino-acid chain: Proteasome subunit alpha type-4-2 (250 aa).

In terms of assembly, the 26S proteasome consists of a 20S proteasome core and two 19S regulatory subunits. The 20S proteasome core is composed of 28 subunits that are arranged in four stacked rings, resulting in a barrel-shaped structure. The two end rings are each formed by seven alpha subunits, and the two central rings are each formed by seven beta subunits. The catalytic chamber with the active sites is on the inside of the barrel.

The protein localises to the cytoplasm. It localises to the nucleus. Its function is as follows. The proteasome is a multicatalytic proteinase complex which is characterized by its ability to cleave peptides with Arg, Phe, Tyr, Leu, and Glu adjacent to the leaving group at neutral or slightly basic pH. The proteasome has an ATP-dependent proteolytic activity. This Oryza sativa subsp. indica (Rice) protein is Proteasome subunit alpha type-4-2.